The chain runs to 98 residues: uncharacterized protein (98 aa).

It belongs to the CFAP97 family.

This is an uncharacterized protein from Homo sapiens (Human).